The sequence spans 291 residues: Ribosomal RNA small subunit methyltransferase H (291 aa).

S-adenosyl-L-methionine contacts are provided by residues 36-38 (GGH), aspartate 55, leucine 88, aspartate 102, and glutamine 109. Positions 268–291 (KPTQEETKNNPRARSAKLRVAERI) are disordered.

It belongs to the methyltransferase superfamily. RsmH family.

The protein localises to the cytoplasm. The enzyme catalyses cytidine(1402) in 16S rRNA + S-adenosyl-L-methionine = N(4)-methylcytidine(1402) in 16S rRNA + S-adenosyl-L-homocysteine + H(+). In terms of biological role, specifically methylates the N4 position of cytidine in position 1402 (C1402) of 16S rRNA. The protein is Ribosomal RNA small subunit methyltransferase H of Thermosipho melanesiensis (strain DSM 12029 / CIP 104789 / BI429).